Consider the following 217-residue polypeptide: Adenylate kinase (217 aa).

10–15 (GAGKGT) serves as a coordination point for ATP. Residues 30-59 (STGDMFRAAMKEETQLGLEAKSFIDKGELV) are NMP. Residues T31, R36, 57-59 (ELV), 85-88 (GFPR), and Q92 each bind AMP. The interval 126–163 (GRRICKNCGATYHLVFNPPAKENVCDKCGGELYQRADD) is LID. Residue R127 participates in ATP binding. Positions 130 and 133 each coordinate Zn(2+). 136 to 137 (TY) provides a ligand contact to ATP. 2 residues coordinate Zn(2+): C150 and C153. Residues R160 and R171 each contribute to the AMP site. ATP is bound at residue K199.

Belongs to the adenylate kinase family. Monomer.

It is found in the cytoplasm. The enzyme catalyses AMP + ATP = 2 ADP. Its pathway is purine metabolism; AMP biosynthesis via salvage pathway; AMP from ADP: step 1/1. Catalyzes the reversible transfer of the terminal phosphate group between ATP and AMP. Plays an important role in cellular energy homeostasis and in adenine nucleotide metabolism. This is Adenylate kinase from Bacillus pumilus (strain SAFR-032).